The primary structure comprises 328 residues: MSLIKIDQKAYEYNLRHIAKKIGSFQRLICVFKDNAYGHGAKLLAPLAKNLGVSFVAVKSEEEAQEIEEFFENILILSHRPHGNENSRFIYALNDISQAKKYKQDIKIHLKIDTGMHRNGICVENLEHAIDLIQSSDLKLTGMFTHFASADEMDGSFFVQKENFQKAKKIVKKYFSNLLFHSHNSAALFRGKIPEDEYCRVGLVQFGYGDSNLKRVLSLYAHRLSQRILQKGQSIGYGGIFTAAKDMEVATYDLGYADGLFRYNGKGELVLGNGKVMLGKMSMDSFSCENSGEEICVFKDADIWADFFHTINYEILVKLNPNIQRVLV.

Lys33 (proton acceptor; specific for D-alanine) is an active-site residue. Lys33 is subject to N6-(pyridoxal phosphate)lysine. Arg118 serves as a coordination point for substrate. Tyr237 acts as the Proton acceptor; specific for L-alanine in catalysis. Met283 is a binding site for substrate.

It belongs to the alanine racemase family. The cofactor is pyridoxal 5'-phosphate.

It catalyses the reaction L-alanine = D-alanine. Its pathway is amino-acid biosynthesis; D-alanine biosynthesis; D-alanine from L-alanine: step 1/1. Catalyzes the interconversion of L-alanine and D-alanine. May also act on other amino acids. This Campylobacter jejuni (strain RM1221) protein is Alanine racemase (alr).